The following is a 284-amino-acid chain: MEAIKKKMQMLKLDKENALDRAEQAEAEQKQAEERSKQLEDELAAMQKKLKGTEDELDKYSEALKDAQEKLELAEKKAADAEAEVASLNRRIQLVEEELDRAQERLATALQKLEEAEKAADESERGMKVIENRALKDEEKMELQEIQLKEAKHIAEEADRKYEEVARKLVIIEGDLERTEERAELAEFKCFELEEELKNVTNNLKFLEAQAEKYFQKKDKYEEEIKILTDKLKEAETRAEFAERSVAKLEKTIDDLEDELYAQKLKYKAISEELDHALNDMTSI.

Met-1 carries the post-translational modification N-acetylmethionine. Positions 1-40 (MEAIKKKMQMLKLDKENALDRAEQAEAEQKQAEERSKQLE) are disordered. The stretch at 1–284 (MEAIKKKMQM…DHALNDMTSI (284 aa)) forms a coiled coil. Basic and acidic residues predominate over residues 12–40 (KLDKENALDRAEQAEAEQKQAEERSKQLE). Position 53 is a phosphothreonine (Thr-53). Residues Ser-61 and Ser-87 each carry the phosphoserine modification. Phosphothreonine occurs at positions 108 and 252. A Phosphotyrosine modification is found at Tyr-261. Phosphoserine is present on Ser-271. Thr-282 carries the phosphothreonine modification. A Phosphoserine modification is found at Ser-283.

It belongs to the tropomyosin family. Homodimer. Heterodimer of an alpha (TPM1, TPM3 or TPM4) and a beta (TPM2) chain. Interacts with TMOD1. Interacts with TNNT1.

Its subcellular location is the cytoplasm. It localises to the cytoskeleton. Functionally, binds to actin filaments in muscle and non-muscle cells. Plays a central role, in association with the troponin complex, in the calcium dependent regulation of vertebrate striated muscle contraction. Smooth muscle contraction is regulated by interaction with caldesmon. In non-muscle cells is implicated in stabilizing cytoskeleton actin filaments. This chain is Tropomyosin alpha-3 chain (TPM3), found in Sus scrofa (Pig).